The chain runs to 919 residues: Protein phosphatase 1 regulatory subunit 37 (919 aa).

LRR repeat units follow at residues 340 to 361 (SLQY…FVAR), 368 to 388 (SLTV…MLLA), 396 to 417 (NLRE…AQLG), 425 to 445 (NIQI…AYVC), 454 to 474 (GLVT…GYLA), and 482 to 502 (SLET…HKLK). 2 disordered regions span residues 626–716 (ATED…TIPS) and 790–866 (APSQ…APLP). Positions 631–640 (THEEEEEEEA) are enriched in acidic residues. Basic and acidic residues predominate over residues 641 to 658 (SPLKKIEEETTDALKDAT). A compositionally biased stretch (acidic residues) spans 677–690 (PQDDSDSDTEDEET). Residues 691 to 701 (PTNTSLTSTSP) are compositionally biased toward low complexity. Polar residues-rich tracts occupy residues 791–801 (PSQTQNSTQPT) and 811–837 (DAQQ…LTES). The stretch at 833 to 861 (QLTESVSEEEQKKAETLNNEADINEDANT) forms a coiled coil.

It belongs to the PPP1R37 family.

Functionally, may inhibit phosphatase activity of protein phosphatase 1 (PP1) complexes. The polypeptide is Protein phosphatase 1 regulatory subunit 37 (ppp1r37) (Danio rerio (Zebrafish)).